Reading from the N-terminus, the 579-residue chain is MSSLMAIRCARTQNIVTIGSLLQLRSSFPRLSSQFHFSGTLNSIPIKHLSTSAAANDYHQNPQSGSPSQHQRPYPPQSFDSQNQTNTNQRVPQSPNQWSTQHGGQIPQYGGQNPQHGGQRPPYGGQNPQQGGQMSQYGGHNPQHGGHRPQYGGQRPQYGGPGNNYQNQNVQQSNQSQYYTPQQQQQPQPPRSSNQSPNQMNEVAPPPSVEEVMRLCQRRLYKDAIELLDKGAMPDRECFVLLFESCANLKSLEHSKKVHDHFLQSKFRGDPKLNNMVISMFGECSSITDAKRVFDHMVDKDMDSWHLMMCAYSDNGMGDDALHLFEEMTKHGLKPNEETFLTVFLACATVGGIEEAFLHFDSMKNEHGISPKTEHYLGVLGVLGKCGHLVEAEQYIRDLPFEPTADFWEAMRNYARLHGDIDLEDYMEELMVDVDPSKAVINKIPTPPPKSFKETNMVTSKSRILEFRNLTFYKDEAKEMAAKKGVVYVPDTRFVLHDIDQEAKEQALLYHSERLAIAYGIICTPPRKTLTIIKNLRVCGDCHNFIKIMSKIIGRVLIVRDNKRFHHFKDGKCSCGDYW.

Residues 1–49 constitute a mitochondrion transit peptide; sequence MSSLMAIRCARTQNIVTIGSLLQLRSSFPRLSSQFHFSGTLNSIPIKHL. 2 stretches are compositionally biased toward polar residues: residues 56–71 and 78–103; these read NDYHQNPQSGSPSQHQ and SFDSQNQTNTNQRVPQSPNQWSTQHG. Residues 56–208 form a disordered region; sequence NDYHQNPQSG…QMNEVAPPPS (153 aa). Low complexity-rich tracts occupy residues 117 to 136 and 148 to 199; these read GGQRPPYGGQNPQQGGQMSQ and RPQY…SPNQ. 5 PPR repeats span residues 235–269, 270–300, 301–335, 336–371, and 372–402; these read DRECFVLLFESCANLKSLEHSKKVHDHFLQSKFRG, DPKLNNMVISMFGECSSITDAKRVFDHMVDK, DMDSWHLMMCAYSDNGMGDDALHLFEEMTKHGLKP, NEETFLTVFLACATVGGIEEAFLHFDSMKNEHGISP, and KTEHYLGVLGVLGKCGHLVEAEQYIRDLPFE. Positions 485-579 are type DYW motif; the sequence is GVVYVPDTRF…DGKCSCGDYW (95 aa).

This sequence belongs to the PPR family. PCMP-H subfamily.

Its subcellular location is the mitochondrion. This is Pentatricopeptide repeat-containing protein At2g15690, mitochondrial (PCMP-H66) from Arabidopsis thaliana (Mouse-ear cress).